The following is a 166-amino-acid chain: Phosphopantetheine adenylyltransferase (166 aa).

Residue T10 coordinates substrate. ATP contacts are provided by residues 10–11 and H18; that span reads TF. Substrate contacts are provided by K42, L75, and R89. ATP contacts are provided by residues 90-92, E100, and 125-131; these read GVR and YTYVAST.

The protein belongs to the bacterial CoaD family. As to quaternary structure, homohexamer. The cofactor is Mg(2+).

The protein localises to the cytoplasm. The catalysed reaction is (R)-4'-phosphopantetheine + ATP + H(+) = 3'-dephospho-CoA + diphosphate. Its pathway is cofactor biosynthesis; coenzyme A biosynthesis; CoA from (R)-pantothenate: step 4/5. Functionally, reversibly transfers an adenylyl group from ATP to 4'-phosphopantetheine, yielding dephospho-CoA (dPCoA) and pyrophosphate. This is Phosphopantetheine adenylyltransferase from Chlorobaculum parvum (strain DSM 263 / NCIMB 8327) (Chlorobium vibrioforme subsp. thiosulfatophilum).